The sequence spans 258 residues: MSRTWIDIMADSKPDLPDNNKKYRISSKSGILSVLRVMIRNNSQATCYFGDAGSFFPTALLNLDSQRGEMVLDYGPNEEINQQALQVEKWNVVAFPNQVKVQFSCQQIGKTEFEGRNAFLAQIPTSLLRMQKREYYRVATPTTAPVKCVIPLLLGKSPSTVEVLLQDLSCGGMAVIDSNGRSNFEEGSVYENCCIVLPDIGTVNVSMRIIRVEPADTGFVHDLQSQRVSCEFADAGENALSLIQRYITRLELEQKRAS.

Positions 131-248 constitute a PilZ domain; that stretch reads QKREYYRVAT…ALSLIQRYIT (118 aa).

Belongs to the YcgR family. Monomer. Interacts with the flagellar basal bodies.

The protein resides in the bacterial flagellum basal body. In terms of biological role, acts as a flagellar brake, regulating swimming and swarming in a bis-(3'-5') cyclic diguanylic acid (c-di-GMP)-dependent manner. Binds 1 c-di-GMP dimer per subunit. Increasing levels of c-di-GMP lead to decreased motility. This Nitrosospira multiformis (strain ATCC 25196 / NCIMB 11849 / C 71) protein is Flagellar brake protein YcgR.